We begin with the raw amino-acid sequence, 483 residues long: Cysteine--tRNA ligase (483 aa).

Position 29 (Cys-29) interacts with Zn(2+). The 'HIGH' region motif lies at 31-41 (PTVYGHAHLGH). Residues Cys-221, His-246, and Glu-250 each coordinate Zn(2+). Residues 278–282 (KMGKS) carry the 'KMSKS' region motif. Lys-281 serves as a coordination point for ATP.

Belongs to the class-I aminoacyl-tRNA synthetase family. In terms of assembly, monomer. It depends on Zn(2+) as a cofactor.

It is found in the cytoplasm. It catalyses the reaction tRNA(Cys) + L-cysteine + ATP = L-cysteinyl-tRNA(Cys) + AMP + diphosphate. This Chlorobium luteolum (strain DSM 273 / BCRC 81028 / 2530) (Pelodictyon luteolum) protein is Cysteine--tRNA ligase.